Consider the following 430-residue polypeptide: Probable ribosomal RNA small subunit methyltransferase B (430 aa).

Residues Cys-246–Lys-252, Asp-270, Asp-299, and Asp-318 each bind S-adenosyl-L-methionine. The active-site Nucleophile is the Cys-371.

The protein belongs to the class I-like SAM-binding methyltransferase superfamily. RsmB/NOP family.

The protein localises to the cytoplasm. The catalysed reaction is cytidine(967) in 16S rRNA + S-adenosyl-L-methionine = 5-methylcytidine(967) in 16S rRNA + S-adenosyl-L-homocysteine + H(+). Functionally, specifically methylates the cytosine at position 967 (m5C967) of 16S rRNA. The sequence is that of Probable ribosomal RNA small subunit methyltransferase B from Coxiella burnetii (strain RSA 493 / Nine Mile phase I).